An 868-amino-acid chain; its full sequence is Rifampicin phosphotransferase (868 aa).

An ATP-binding region spans residues 1 to 313 (MSSFVLDFQE…IYIVQSRPIT (313 aa)). ATP contacts are provided by Lys-22, Arg-116, Gly-131, Thr-135, Gln-182, Glu-296, Gln-308, and Arg-310. Residues 326–756 (NHVYISVGHQ…TSDGEIITGK (431 aa)) form a rifampicin-binding region. The tract at residues 769-867 (GLPVSSGVVE…VHGTEGYIEV (99 aa)) is swivel phosphohistidine. Catalysis depends on His-827, which acts as the Tele-phosphohistidine intermediate.

The protein belongs to the rifampicin phosphotransferase family.

It catalyses the reaction rifampicin + ATP + H2O = 21-phosphorifampicin + AMP + phosphate + 2 H(+). Catalyzes the phosphorylation of rifampicin, also known as rifampin (RIF), leading to its inactivation. Confers high level resistance to a variety of clinically used rifamycin antibiotics. Does not show phosphoenolpyruvate (PEP) synthase activity. The protein is Rifampicin phosphotransferase of Bacillus cereus (strain ATCC 14579 / DSM 31 / CCUG 7414 / JCM 2152 / NBRC 15305 / NCIMB 9373 / NCTC 2599 / NRRL B-3711).